The following is a 527-amino-acid chain: Peptide chain release factor 3 (527 aa).

A tr-type G domain is found at 9–277 (AKRRTFAIIS…AVVDWAPRPL (269 aa)). GTP contacts are provided by residues 18-25 (SHPDAGKT), 86-90 (DTPGH), and 140-143 (NKLD).

This sequence belongs to the TRAFAC class translation factor GTPase superfamily. Classic translation factor GTPase family. PrfC subfamily.

It is found in the cytoplasm. Its function is as follows. Increases the formation of ribosomal termination complexes and stimulates activities of RF-1 and RF-2. It binds guanine nucleotides and has strong preference for UGA stop codons. It may interact directly with the ribosome. The stimulation of RF-1 and RF-2 is significantly reduced by GTP and GDP, but not by GMP. This is Peptide chain release factor 3 from Ectopseudomonas mendocina (strain ymp) (Pseudomonas mendocina).